Consider the following 175-residue polypeptide: Ribulose bisphosphate carboxylase small subunit, chloroplastic (175 aa).

The N-terminal 46 residues, 1–46, are a transit peptide targeting the chloroplast; it reads MAPTVMASSATSVAPFQGLKSTAGLPVSRRSNGASLGSVSNGGRIR.

The protein belongs to the RuBisCO small chain family. As to quaternary structure, heterohexadecamer of 8 large and 8 small subunits.

It is found in the plastid. The protein resides in the chloroplast. In terms of biological role, ruBisCO catalyzes two reactions: the carboxylation of D-ribulose 1,5-bisphosphate, the primary event in carbon dioxide fixation, as well as the oxidative fragmentation of the pentose substrate. Both reactions occur simultaneously and in competition at the same active site. Although the small subunit is not catalytic it is essential for maximal activity. The sequence is that of Ribulose bisphosphate carboxylase small subunit, chloroplastic from Aegilops tauschii (Tausch's goatgrass).